The sequence spans 405 residues: Syndecan-3 (405 aa).

A signal peptide spans 1–22 (MPAELRRLAVLLLLLSARAALA). Residues 23-347 (QPWRNENYER…PQKNILERKE (325 aa)) lie on the Extracellular side of the membrane. The disordered stretch occupies residues 31–59 (ERPVDLEGSGDDDPFGDDELDDIYSGSGS). Positions 38–52 (GSGDDDPFGDDELDD) are enriched in acidic residues. O-linked (Xyl...) (glycosaminoglycan) serine glycans are attached at residues Ser-39, Ser-55, Ser-57, Ser-59, and Ser-66. Disordered stretches follow at residues 134–159 (TTTA…ATTT) and 191–301 (TRAT…ELGN). Residues 191 to 201 (TRATTLETPTT) are compositionally biased toward low complexity. The segment covering 202–237 (SIPETSVLTEVTTSRLVPSSTAKPRSLPKPSTSRTA) has biased composition (polar residues). O-linked (Xyl...) (glycosaminoglycan) serine glycans are attached at residues Ser-280, Ser-283, and Ser-330. The chain crosses the membrane as a helical span at residues 348–372 (VLIAVIVGGVVGALFAAFLVMLLIY). Topologically, residues 373-405 (RMKKKDEGSYTLEEPKQANVTYQKPDKQEEFYA) are cytoplasmic.

It belongs to the syndecan proteoglycan family. O-glycosylated within the Thr/Ser-rich region which could interact with lectin domains on other molecules. Proximal chondrogenic central core of embryonic limb buds where cartilage differentiation is being initiated.

Its subcellular location is the membrane. Functionally, cell surface proteoglycan that may bear both heparan sulfate and chondroitin sulfate. The multiple functional domains provide potential sites for mediating the adhesive cell-matrix interactions and cytoskeletal reorganization involved in limb chondrogenesis. Interaction with other matrix ligands as well as phosphorylation and shedding of the ectodomain might be involved in cell shape changes that occur during chondrogenesis. Furthermore, shedding of the ectodomain might break the adhesive interactions that promoted condensation, thus facilitating the deposition of cartilage matrix molecules. In Gallus gallus (Chicken), this protein is Syndecan-3 (SDC3).